A 756-amino-acid chain; its full sequence is Serine/threonine-protein kinase CBK1 (756 aa).

Disordered regions lie at residues Met-1–Ser-180 and Gln-242–Thr-261. A compositionally biased stretch (low complexity) spans Gln-23–Gln-34. Over residues Phe-53–Asn-77 the composition is skewed to polar residues. A Phosphothreonine modification is found at Thr-109. The segment covering His-120–Ser-180 has biased composition (polar residues). Positions Gln-242–Ser-255 are enriched in low complexity. The Protein kinase domain occupies Phe-352–Phe-672. ATP is bound by residues Ile-358–Val-366 and Lys-381. Asp-475 (proton acceptor) is an active-site residue. Residues Arg-673 to Asn-754 form the AGC-kinase C-terminal domain. A disordered region spans residues Asn-707–Pro-732.

Belongs to the protein kinase superfamily. STE Ser/Thr protein kinase family. COT1 subfamily. Associates with PAG1/TAO3 and interacts with MOB2.

It carries out the reaction L-seryl-[protein] + ATP = O-phospho-L-seryl-[protein] + ADP + H(+). It catalyses the reaction L-threonyl-[protein] + ATP = O-phospho-L-threonyl-[protein] + ADP + H(+). In terms of biological role, protein kinase that seems to play a role in the regulation of cell morphogenesis and proliferation. This Saccharomyces cerevisiae (strain ATCC 204508 / S288c) (Baker's yeast) protein is Serine/threonine-protein kinase CBK1 (CBK1).